The primary structure comprises 810 residues: DNA replication licensing factor mcm-6 (810 aa).

One can recognise an MCM domain in the interval 346-553 (IEKNIVDSLF…VTDYAIARRI (208 aa)). Residues S400, T401, A402, K403, S404, and N505 each coordinate ATP. Residues 529 to 532 (SRFD) carry the Arginine finger motif. Residues R622 and E625 each contribute to the ADP site. Positions 685–705 (KENQGGDDDMEHDGEKDETAK) are disordered.

It belongs to the MCM family. As to quaternary structure, component of the mcm2-7 complex. The complex forms a toroidal hexameric ring with the proposed subunit order mcm2-mcm6-mcm4-mcm7-mcm3-mcm5 (By simililarity).

It is found in the nucleus. It carries out the reaction ATP + H2O = ADP + phosphate + H(+). Its function is as follows. Acts as a component of the MCM2-7 complex (MCM complex) which is the replicative helicase essential for 'once per cell cycle' DNA replication initiation and elongation in eukaryotic cells. Core component of CDC45-MCM-GINS (CMG) helicase, the molecular machine that unwinds template DNA during replication, and around which the replisome is built. The active ATPase sites in the MCM2-7 ring are formed through the interaction surfaces of two neighboring subunits such that a critical structure of a conserved arginine finger motif is provided in trans relative to the ATP-binding site of the Walker A box of the adjacent subunit. The six ATPase active sites, however, are likely to contribute differentially to the complex helicase activity. The polypeptide is DNA replication licensing factor mcm-6 (Caenorhabditis briggsae).